The primary structure comprises 529 residues: UDP-glucuronosyltransferase 2B7 (529 aa).

Residues 1-23 form the signal peptide; it reads MSVKWTSVILLIQLSFCFSSGNC. N-linked (GlcNAc...) asparagine glycans are attached at residues asparagine 67, asparagine 68, and asparagine 315. Residues 373-379 and aspartate 398 contribute to the UDP-alpha-D-glucuronate site; that span reads THGGANG. Residues 493–509 form a helical membrane-spanning segment; sequence VIGFLLVCVATVIFIVT.

It belongs to the UDP-glycosyltransferase family.

It localises to the endoplasmic reticulum membrane. The enzyme catalyses glucuronate acceptor + UDP-alpha-D-glucuronate = acceptor beta-D-glucuronoside + UDP + H(+). It carries out the reaction 17alpha-estradiol + UDP-alpha-D-glucuronate = 17alpha-estradiol 17-O-(beta-D-glucuronate) + UDP + H(+). The catalysed reaction is 17beta-estradiol + UDP-alpha-D-glucuronate = 17beta-estradiol 17-O-(beta-D-glucuronate) + UDP + H(+). It catalyses the reaction 2-hydroxy-17beta-estradiol + UDP-alpha-D-glucuronate = 2-hydroxy-17beta-estradiol 3-O-(beta-D-glucuronate) + UDP + H(+). The enzyme catalyses 4-hydroxy-17beta-estradiol + UDP-alpha-D-glucuronate = 17beta-estradiol 4-O-(beta-D-glucuronate) + UDP + H(+). It carries out the reaction 4-hydroxyestrone + UDP-alpha-D-glucuronate = estrone 4-O-(beta-D-glucuronate) + UDP + H(+). The catalysed reaction is 16alpha-hydroxyestrone + UDP-alpha-D-glucuronate = 16alpha-hydroxyestrone 16-O-(beta-D-glucuronate) + UDP + H(+). It catalyses the reaction 16alpha,17beta-estriol + UDP-alpha-D-glucuronate = 16alpha,17beta-estriol 16-O-(beta-D-glucuronate) + UDP + H(+). The enzyme catalyses 16beta,17beta-estriol + UDP-alpha-D-glucuronate = 16beta,17beta-estriol 16-O-(beta-D-glucuronate) + UDP + H(+). It carries out the reaction 16alpha,17alpha-estriol + UDP-alpha-D-glucuronate = 16alpha,17alpha-estriol 16-O-(beta-D-glucuronate) + UDP + H(+). The catalysed reaction is 16alpha,17alpha-estriol + UDP-alpha-D-glucuronate = 16alpha,17alpha-estriol 17-O-(beta-D-glucuronate) + UDP + H(+). It catalyses the reaction epitestosterone + UDP-alpha-D-glucuronate = epitestosterone 17-O-(beta-D-glucuronate) + UDP + H(+). The enzyme catalyses hyodeoxycholate + UDP-alpha-D-glucuronate = hyodeoxycholate 6-O-(beta-D-glucuronate) + UDP + H(+). It carries out the reaction hyocholate + UDP-alpha-D-glucuronate = hyocholate 6-O-(beta-D-glucuronate) + UDP + H(+). The catalysed reaction is all-trans-retinoate + UDP-alpha-D-glucuronate = all-trans-retinoyl-1-O-(beta-D-glucuronate) + UDP. It catalyses the reaction all-trans-4-hydroxyretinoate + UDP-alpha-D-glucuronate = all-trans-4-hydroxy-4-O-(beta-D-glucuronide)-retinoate + UDP + H(+). The enzyme catalyses (E)-ferulate + UDP-alpha-D-glucuronate = (E)-ferulic acid beta-D-glucuronate ester + UDP. It carries out the reaction 8-iso-prostaglandin F2alpha + UDP-alpha-D-glucuronate = 8-iso-prostaglandin F2alpha-glucuronide + UDP + H(+). The catalysed reaction is 5-epi-5-F2t-IsoP + UDP-alpha-D-glucuronate = 5-epi-5-F2t-IsoP-glucuronide + UDP + H(+). It catalyses the reaction (5Z,8Z,11Z,14Z)-eicosatetraenoate + UDP-alpha-D-glucuronate = O-[(5Z),(8Z),(11Z),(14Z)-eicosatetraenoyl]-beta-D-glucuronate + UDP. The enzyme catalyses 15-hydroxy-(5Z,8Z,11Z,13E)-eicosatetraenoate + UDP-alpha-D-glucuronate = 15-O-(beta-D-glucuronosyl)-(5Z,8Z,11Z,14Z)-eicosatetraenoate + UDP + H(+). It carries out the reaction 20-hydroxy-(5Z,8Z,11Z,14Z)-eicosatetraenoate + UDP-alpha-D-glucuronate = 20-O-(beta-D-glucuronosyl)-(5Z,8Z,11Z,14Z)-eicosatetraenoate + UDP + H(+). The catalysed reaction is (E)-ferulate + UDP-alpha-D-glucuronate = (E)-4-O-(beta-D-glucuronosyl)-ferulate + UDP + H(+). It catalyses the reaction prostaglandin B1 + UDP-alpha-D-glucuronate = 15-O-(beta-D-glucuronosyl)-prostaglandin B1 + UDP + H(+). The enzyme catalyses mycophenolate + UDP-alpha-D-glucuronate = mycophenolic acid O-acyl-beta-D-glucuronide + UDP. It carries out the reaction losartan + UDP-alpha-D-glucuronate = losartan-2-N-beta-D-glucuronide + UDP. The catalysed reaction is candesartan + UDP-alpha-D-glucuronate = candesartan O-beta-D-glucuronoside + UDP. It catalyses the reaction candesartan + UDP-alpha-D-glucuronate = candesartan-2-N-beta-D-glucuronide + UDP. The enzyme catalyses zolasartan + UDP-alpha-D-glucuronate = zolarsartan O-beta-D-glucuronoside + UDP. Its function is as follows. UDP-glucuronosyltransferase (UGT) that catalyzes phase II biotransformation reactions in which lipophilic substrates are conjugated with glucuronic acid to increase the metabolite's water solubility, thereby facilitating excretion into either the urine or bile. Essential for the elimination and detoxification of drugs, xenobiotics and endogenous compounds. Catalyzes the glucuronidation of endogenous steroid hormones such as androgens (epitestosterone, androsterone) and estrogens (estradiol, epiestradiol, estriol, catechol estrogens). Also regulates the levels of retinoic acid, a major metabolite of vitamin A involved in apoptosis, cellular growth and differentiation, and embryonic development. Contributes to bile acid (BA) detoxification by catalyzing the glucuronidation of BA substrates, which are natural detergents for dietary lipids absorption. Involved in the glucuronidation of arachidonic acid (AA) and AA-derived eicosanoids including 15-HETE, 20-HETE, PGE2, PGB1 and F2-isoprostanes (8-iso-PGF2alpha and 5-epi-5-F2t-IsoP). Involved in the glucuronidation of the phytochemical ferulic acid at the phenolic or the carboxylic acid group. Involved in the glucuronidation of the AGTR1 angiotensin receptor antagonist losartan, caderastan and zolarsatan, drugs which can inhibit the effect of angiotensin II. Also metabolizes mycophenolate, an immunosuppressive agent. The polypeptide is UDP-glucuronosyltransferase 2B7 (Homo sapiens (Human)).